A 90-amino-acid chain; its full sequence is uncharacterized protein (90 aa).

A signal peptide spans 1-20 (MEKLFVLVFALTLLAFSSEA). Residues 31–50 (QLLRSRRQDRPSKPGFPDEP) form a disordered region.

It is found in the secreted. This is an uncharacterized protein from Rattus norvegicus (Rat).